Reading from the N-terminus, the 206-residue chain is Dephospho-CoA kinase (206 aa).

The DPCK domain maps to 4 to 204; it reads VIGLTGGIAS…EGYIESHSED (201 aa). Residue 12-17 coordinates ATP; that stretch reads ASGKST.

It belongs to the CoaE family.

Its subcellular location is the cytoplasm. It catalyses the reaction 3'-dephospho-CoA + ATP = ADP + CoA + H(+). It participates in cofactor biosynthesis; coenzyme A biosynthesis; CoA from (R)-pantothenate: step 5/5. Its function is as follows. Catalyzes the phosphorylation of the 3'-hydroxyl group of dephosphocoenzyme A to form coenzyme A. The protein is Dephospho-CoA kinase of Staphylococcus saprophyticus subsp. saprophyticus (strain ATCC 15305 / DSM 20229 / NCIMB 8711 / NCTC 7292 / S-41).